Reading from the N-terminus, the 179-residue chain is MVMIMRICIQPVGDVNDEILKFLKKKFGEVFGMCEILPKIDIPIYAYNFSRGQFNSTLILKSLPTVEDIVLGVTEVDIYADNLNFVFGEAELFGKRALISLARLRPEFYGLPPNKDVLKIRALKEAIHEIGHVLGLIHCENKRCVMSFSNSIIDVDLKDWRYCKKCLKKLQDRGIYISI.

Histidine 128 contributes to the Zn(2+) binding site. Catalysis depends on glutamate 129, which acts as the Proton acceptor. Residues histidine 132, histidine 138, cysteine 139, cysteine 144, cysteine 163, and cysteine 166 each contribute to the Zn(2+) site.

It belongs to the peptidase M54 family. Monomer. The cofactor is Zn(2+).

In terms of biological role, probable zinc metalloprotease whose natural substrate is unknown. This chain is Archaemetzincin, found in Methanocaldococcus jannaschii (strain ATCC 43067 / DSM 2661 / JAL-1 / JCM 10045 / NBRC 100440) (Methanococcus jannaschii).